A 341-amino-acid polypeptide reads, in one-letter code: L-threonine 3-dehydrogenase (341 aa).

Cys38 serves as a coordination point for Zn(2+). Catalysis depends on charge relay system residues Thr40 and His43. Zn(2+) is bound by residues His63, Glu64, Cys93, Cys96, Cys99, and Cys107. Residues Ile175, Asp195, Arg200, 262 to 264 (LGI), and 286 to 287 (IY) each bind NAD(+).

Belongs to the zinc-containing alcohol dehydrogenase family. Homotetramer. Zn(2+) serves as cofactor.

Its subcellular location is the cytoplasm. It carries out the reaction L-threonine + NAD(+) = (2S)-2-amino-3-oxobutanoate + NADH + H(+). It participates in amino-acid degradation; L-threonine degradation via oxydo-reductase pathway; glycine from L-threonine: step 1/2. In terms of biological role, catalyzes the NAD(+)-dependent oxidation of L-threonine to 2-amino-3-ketobutyrate. The sequence is that of L-threonine 3-dehydrogenase from Shewanella sediminis (strain HAW-EB3).